Here is a 158-residue protein sequence, read N- to C-terminus: MARAKAEIQPVAENRKARHDYFVEETYEAGIVLVGSEVKSCRAGRVNLRDAYAQIKDGEIFLLNCHISPFEQANRFNHEPLRPRKLLMHKSEIHRLYGKVREKGFTLVPLRLYFNQKGKVKVELALAKGKRAYDKRDDIAAREAKREMARALRGRYDD.

The protein belongs to the SmpB family.

It is found in the cytoplasm. Required for rescue of stalled ribosomes mediated by trans-translation. Binds to transfer-messenger RNA (tmRNA), required for stable association of tmRNA with ribosomes. tmRNA and SmpB together mimic tRNA shape, replacing the anticodon stem-loop with SmpB. tmRNA is encoded by the ssrA gene; the 2 termini fold to resemble tRNA(Ala) and it encodes a 'tag peptide', a short internal open reading frame. During trans-translation Ala-aminoacylated tmRNA acts like a tRNA, entering the A-site of stalled ribosomes, displacing the stalled mRNA. The ribosome then switches to translate the ORF on the tmRNA; the nascent peptide is terminated with the 'tag peptide' encoded by the tmRNA and targeted for degradation. The ribosome is freed to recommence translation, which seems to be the essential function of trans-translation. The protein is SsrA-binding protein of Symbiobacterium thermophilum (strain DSM 24528 / JCM 14929 / IAM 14863 / T).